We begin with the raw amino-acid sequence, 348 residues long: Lysophosphatidic acid receptor 2 (348 aa).

The Extracellular portion of the chain corresponds to 1 to 30 (MGQCYYNETIGFFYNNSGKELSSHWRPKDV). 2 N-linked (GlcNAc...) asparagine glycosylation sites follow: N7 and N15. A helical membrane pass occupies residues 31–51 (VVVALGLTVSVLVLLTNLLVI). Residues 52–66 (AAIASNRRFHQPIYY) are Cytoplasmic-facing. A helical membrane pass occupies residues 67-87 (LLGNLAAADLFAGVAYLFLMF). The Extracellular portion of the chain corresponds to 88–100 (HTGPRTARLSLEG). A helical transmembrane segment spans residues 101 to 123 (WFLRQGLLDTSLTASVATLLAIA). The Cytoplasmic portion of the chain corresponds to 124-143 (VERHRSVMAVQLHSRLPRGR). A helical membrane pass occupies residues 144-164 (VVMLIVGVWVAALGLGLLPAH). The Extracellular portion of the chain corresponds to 165–185 (SWHCLCALDRCSRMAPLLSRS). A helical membrane pass occupies residues 186–206 (YLAVWALSSLLVFLLMVAVYT). At 207-239 (RIFFYVRRRVQRMAEHVSCHPRYRETTLSLVKT) the chain is on the cytoplasmic side. Residues 240–260 (VVIILGAFVVCWTPGQVVLLL) traverse the membrane as a helical segment. Over 261–276 (DGLGCESCNVLAVEKY) the chain is Extracellular. A helical transmembrane segment spans residues 277–294 (FLLLAEANSLVNAAVYSC). The Cytoplasmic portion of the chain corresponds to 295–348 (RDAEMRRTFRRLLCCACLRQSTRESVHYTSSAQGGASTRIMLPENGHPLMDSTL). Residue C308 is the site of S-palmitoyl cysteine attachment. Positions 345–348 (DSTL) match the PDZ-binding motif.

Belongs to the G-protein coupled receptor 1 family. As to quaternary structure, interacts with SLC9A3R2/NHERF2, MAGI3 and PLCB3. Interacts with RALA and GRK2. Expressed most abundantly in testes and peripheral blood leukocytes with less expression in pancreas, spleen, thymus and prostate. Little or no expression in heart, brain, placenta, lung, liver, skeletal muscle, kidney, ovary, small intestine, or colon.

Its subcellular location is the cell surface. The protein resides in the cell membrane. Its function is as follows. Receptor for lysophosphatidic acid (LPA), a mediator of diverse cellular activities. Seems to be coupled to the G(i)/G(o), G(12)/G(13), and G(q) families of heteromeric G proteins. Plays a key role in phospholipase C-beta (PLC-beta) signaling pathway. Stimulates phospholipase C (PLC) activity in a manner that is independent of RALA activation. This chain is Lysophosphatidic acid receptor 2, found in Homo sapiens (Human).